The primary structure comprises 303 residues: Oxygen-dependent coproporphyrinogen-III oxidase (303 aa).

S94 is a binding site for substrate. The a divalent metal cation site is built by H98 and H108. The active-site Proton donor is H108. N110–R112 serves as a coordination point for substrate. Residues H147 and H177 each contribute to the a divalent metal cation site. Positions Y242 to E277 are important for dimerization. Position 260–262 (G260–R262) interacts with substrate.

It belongs to the aerobic coproporphyrinogen-III oxidase family. In terms of assembly, homodimer. The cofactor is a divalent metal cation.

It localises to the cytoplasm. The catalysed reaction is coproporphyrinogen III + O2 + 2 H(+) = protoporphyrinogen IX + 2 CO2 + 2 H2O. The protein operates within porphyrin-containing compound metabolism; protoporphyrin-IX biosynthesis; protoporphyrinogen-IX from coproporphyrinogen-III (O2 route): step 1/1. Involved in the heme biosynthesis. Catalyzes the aerobic oxidative decarboxylation of propionate groups of rings A and B of coproporphyrinogen-III to yield the vinyl groups in protoporphyrinogen-IX. In Saccharophagus degradans (strain 2-40 / ATCC 43961 / DSM 17024), this protein is Oxygen-dependent coproporphyrinogen-III oxidase.